The primary structure comprises 339 residues: Small ribosomal subunit biogenesis GTPase RsgA (339 aa).

Residues 111 to 271 (MRGLLKPVAA…LIDSPGIREF (161 aa)) enclose the CP-type G domain. GTP contacts are provided by residues 159-162 (NKAD) and 213-221 (GQSGVGKSS). The Zn(2+) site is built by Cys295, Cys300, His302, and Cys308.

The protein belongs to the TRAFAC class YlqF/YawG GTPase family. RsgA subfamily. In terms of assembly, monomer. Associates with 30S ribosomal subunit, binds 16S rRNA. Zn(2+) serves as cofactor.

The protein localises to the cytoplasm. One of several proteins that assist in the late maturation steps of the functional core of the 30S ribosomal subunit. Helps release RbfA from mature subunits. May play a role in the assembly of ribosomal proteins into the subunit. Circularly permuted GTPase that catalyzes slow GTP hydrolysis, GTPase activity is stimulated by the 30S ribosomal subunit. In Pseudomonas aeruginosa (strain ATCC 15692 / DSM 22644 / CIP 104116 / JCM 14847 / LMG 12228 / 1C / PRS 101 / PAO1), this protein is Small ribosomal subunit biogenesis GTPase RsgA.